Reading from the N-terminus, the 312-residue chain is Olfactory receptor 2H2 (312 aa).

Residues 1–23 lie on the Extracellular side of the membrane; that stretch reads MVNQSSTPGFLLLGFSEHPGLER. Asn-3 is a glycosylation site (N-linked (GlcNAc...) asparagine). Residues 24-47 traverse the membrane as a helical segment; that stretch reads TLFVVVLTSYLLTLVGNTLIILLS. The Cytoplasmic segment spans residues 48-55; sequence ALDPKLHS. A helical membrane pass occupies residues 56–77; the sequence is PMYFFLSNLSFLDLCFTTSCVP. The Extracellular segment spans residues 78–98; that stretch reads QMLVNLWGPKKTISFLDCSVQ. Cysteines 95 and 187 form a disulfide. The helical transmembrane segment at 99 to 118 threads the bilayer; sequence IFIFLSLGTTECILLTVMAF. Residues 119–137 lie on the Cytoplasmic side of the membrane; the sequence is DRYVAVCQPLHYATIIHPR. Residues 138–156 traverse the membrane as a helical segment; it reads LCWQLASVAWVIGLVESVV. The Extracellular portion of the chain corresponds to 157–193; the sequence is QTPSTLHLPFCPDRQVDDFVCEVPALIRLSCEDTSYN. Residues 194–217 traverse the membrane as a helical segment; the sequence is EIQVAVASVFILVVPLSLILVSYG. The Cytoplasmic segment spans residues 218-234; it reads AITWAVLRINSAKGRRK. Residues 235–257 traverse the membrane as a helical segment; the sequence is AFGTCSSHLTVVTLFYSSVIAVY. The Extracellular portion of the chain corresponds to 258–270; that stretch reads LQPKNPYAQERGK. The chain crosses the membrane as a helical span at residues 271-290; the sequence is FFGLFYAVGTPSLNPLIYTL. At 291 to 312 the chain is on the cytoplasmic side; sequence RNKEVTRAFRRLLGKEMGLTQS.

This sequence belongs to the G-protein coupled receptor 1 family.

It localises to the cell membrane. In terms of biological role, odorant receptor. The polypeptide is Olfactory receptor 2H2 (OR2H2) (Homo sapiens (Human)).